The chain runs to 868 residues: MNNVTERYVLDLQEIDESQVAVVGGKGAHLGSLSRIEGIRVPAGFCVTTDAYRRVVAQSPSLDAQLEELSRVSPDDQEAIRTLSAEIRRTVEEIAVPDDLAGAITRALARSGERTAYAVRSSATAEDLPTASFAGQQDTYLNVVGPAAILRHISRCWASLFTERAVTYRRRNGIDDRTVRMAVVVQQMVFPHASGILFTADPVSGNRTVATVDAGFGLGEALVSGLVNPDVFKVRHGEVVARTISAKQREVHALLAGGTREVPIDAQRQQQPALTDAQAVRLVELGRRIEARFGRPQDIEWCLVDDDFHIVQSRPITTLFPVPESADQENHVYVSVGHQQMMTDPMKPLGLSMWQQTAMVRMHEAGGRLFVDVTQRLAAPASRAGLLDLMGRGDPLVRDALETVLDREDFVPSLPDAPPAGPRAGAAPEPVATDPAVVTGLIERSQASLAALRRDVLTKTGPELFDFLPTAFEEHKRVLTDPLNFKAIMAGMEATWWLNDKLEEWLGEKNAADTLTLSAPGNVTSEMGLALLDVADVIRPHPQVVEFLAGVEDDDFLDELAKVPGGTEARDAIEAYLDRYGMRCVGEIDITRPRWSERPGTLVPVILDNVRNFEPGAARRRFEQGLQQARKKEQEVLSRLRALPDGERKADETKGMIDRVRTFIGYREYPKYDIISRYFVYKQALMAEAERLAQAGVLAEKEDVFYLTFEEFHDVVRTRQIDDRLVRQRKDAFRAYQALTPPRVLTSDGEALTGAYRRDDVPDGALIGLPVSTGTVEGRARVILDMAEADLEAGDILVTTFTDPSWSPLFVAVAGLVTEVGGLMTHGAVIAREYGLPAVVGVEQATRRIRDGQRIRVHGTDGYIEILS.

The segment at 5-317 is ATP-binding; the sequence is TERYVLDLQE…FHIVQSRPIT (313 aa). 8 residues coordinate ATP: K26, R120, G135, T139, Q186, E300, Q312, and R314. Residues 330–755 are rifampicin-binding; that stretch reads NHVYVSVGHQ…TSDGEALTGA (426 aa). The disordered stretch occupies residues 410 to 430; sequence FVPSLPDAPPAGPRAGAAPEP. The segment at 768–866 is swivel phosphohistidine; sequence GLPVSTGTVE…VHGTDGYIEI (99 aa). The active-site Tele-phosphohistidine intermediate is H826.

Belongs to the rifampicin phosphotransferase family.

It catalyses the reaction rifampicin + ATP + H2O = 21-phosphorifampicin + AMP + phosphate + 2 H(+). Functionally, catalyzes the phosphorylation of rifampicin, also known as rifampin (RIF), leading to its inactivation. Confers high level resistance to a variety of clinically used rifamycin antibiotics. Does not show phosphoenolpyruvate (PEP) synthase activity. The sequence is that of Rifampicin phosphotransferase from Streptomyces sviceus (strain ATCC 29083 / DSM 924 / JCM 4929 / NBRC 13980 / NCIMB 11184 / NRRL 5439 / UC 5370).